Consider the following 404-residue polypeptide: Cysteine desulfurase IscS (404 aa).

Pyridoxal 5'-phosphate is bound by residues 75-76 (AT), N155, Q183, and 203-205 (SSH). Position 206 is an N6-(pyridoxal phosphate)lysine (K206). Pyridoxal 5'-phosphate is bound at residue T243. C328 serves as the catalytic Cysteine persulfide intermediate. [2Fe-2S] cluster is bound at residue C328.

This sequence belongs to the class-V pyridoxal-phosphate-dependent aminotransferase family. NifS/IscS subfamily. Homodimer. Forms a heterotetramer with IscU, interacts with other sulfur acceptors. Pyridoxal 5'-phosphate is required as a cofactor.

The protein localises to the cytoplasm. It carries out the reaction (sulfur carrier)-H + L-cysteine = (sulfur carrier)-SH + L-alanine. It functions in the pathway cofactor biosynthesis; iron-sulfur cluster biosynthesis. In terms of biological role, master enzyme that delivers sulfur to a number of partners involved in Fe-S cluster assembly, tRNA modification or cofactor biosynthesis. Catalyzes the removal of elemental sulfur atoms from cysteine to produce alanine. Functions as a sulfur delivery protein for Fe-S cluster synthesis onto IscU, an Fe-S scaffold assembly protein, as well as other S acceptor proteins. This Pasteurella multocida (strain Pm70) protein is Cysteine desulfurase IscS.